The primary structure comprises 125 residues: Large ribosomal subunit protein bL19 (125 aa).

The protein belongs to the bacterial ribosomal protein bL19 family.

In terms of biological role, this protein is located at the 30S-50S ribosomal subunit interface and may play a role in the structure and function of the aminoacyl-tRNA binding site. The sequence is that of Large ribosomal subunit protein bL19 from Ehrlichia canis (strain Jake).